A 113-amino-acid chain; its full sequence is uncharacterized protein (113 aa).

The SWIM-type zinc finger occupies 49-91 (FFVVVGKEEYVVEGGFCTCPDFLVNLKGKSPCAHIIAVEVAKI).

This is an uncharacterized protein from Archaeoglobus fulgidus (strain ATCC 49558 / DSM 4304 / JCM 9628 / NBRC 100126 / VC-16).